Consider the following 300-residue polypeptide: Acetylglutamate kinase (300 aa).

Residues 68–69 (GG), Arg90, and Asn194 contribute to the substrate site.

This sequence belongs to the acetylglutamate kinase family. ArgB subfamily.

Its subcellular location is the cytoplasm. It catalyses the reaction N-acetyl-L-glutamate + ATP = N-acetyl-L-glutamyl 5-phosphate + ADP. It participates in amino-acid biosynthesis; L-arginine biosynthesis; N(2)-acetyl-L-ornithine from L-glutamate: step 2/4. Functionally, catalyzes the ATP-dependent phosphorylation of N-acetyl-L-glutamate. The sequence is that of Acetylglutamate kinase from Methanocaldococcus jannaschii (strain ATCC 43067 / DSM 2661 / JAL-1 / JCM 10045 / NBRC 100440) (Methanococcus jannaschii).